We begin with the raw amino-acid sequence, 285 residues long: NAD kinase (285 aa).

Residue Asp66 is the Proton acceptor of the active site. NAD(+) contacts are provided by residues 66–67 (DG), 137–138 (ND), Arg148, Arg165, Asp167, and 178–183 (TAYSLS).

The protein belongs to the NAD kinase family. Requires a divalent metal cation as cofactor.

The protein resides in the cytoplasm. The enzyme catalyses NAD(+) + ATP = ADP + NADP(+) + H(+). Functionally, involved in the regulation of the intracellular balance of NAD and NADP, and is a key enzyme in the biosynthesis of NADP. Catalyzes specifically the phosphorylation on 2'-hydroxyl of the adenosine moiety of NAD to yield NADP. This Prosthecochloris aestuarii (strain DSM 271 / SK 413) protein is NAD kinase.